The primary structure comprises 666 residues: Probable potassium transport system protein Kup (666 aa).

Transmembrane regions (helical) follow at residues 16–36 (GFII…LYTM), 58–78 (ISLI…LIAL), 98–118 (ISPW…SDGA), 141–161 (IYQN…VLFG), 165–185 (FGTG…FSFL), 221–241 (IFIL…YSDL), 253–273 (WPFV…WILA), 299–319 (LATL…FTLI), 343–363 (LYIP…VLAF), 373–393 (YGLA…YYLI), 399–419 (PILA…FFLA), and 424–444 (FMHG…VMFI).

Belongs to the HAK/KUP transporter (TC 2.A.72) family.

It is found in the cell membrane. It catalyses the reaction K(+)(in) + H(+)(in) = K(+)(out) + H(+)(out). Functionally, transport of potassium into the cell. Likely operates as a K(+):H(+) symporter. The sequence is that of Probable potassium transport system protein Kup from Streptococcus pyogenes serotype M28 (strain MGAS6180).